A 117-amino-acid chain; its full sequence is UPF0102 protein Swoo_0351 (117 aa).

The protein belongs to the UPF0102 family.

The polypeptide is UPF0102 protein Swoo_0351 (Shewanella woodyi (strain ATCC 51908 / MS32)).